Here is a 233-residue protein sequence, read N- to C-terminus: MKKTIMASSLAVALGVTGYAAGTGHQAHAAEVNVDQAHLVDLAHNHQDQLNAAPIKDGAYDIHFVKDGFQYNFTSNGTTWSWSYEAANGQTAGFSNVAGADYTTSYNQGSDVQSVSYNAQSSNSNVEAVSAPTYHNYSTSTTSSSVRLSNGNTAGATGSSAAQIMAQRTGVSASTWAAIIARESNGQVNAYNPSGASGLFQTMPGWGPTNTVDQQINAAVKAYKAQGLGAWGF.

Positions Met-1–Ala-29 are cleaved as a signal peptide.

Belongs to the transglycosylase family. IsaA subfamily.

It localises to the secreted. Its function is as follows. Is able to cleave peptidoglycan. The chain is Probable transglycosylase IsaA (isaA) from Staphylococcus aureus (strain Mu3 / ATCC 700698).